Reading from the N-terminus, the 283-residue chain is Secretory carrier-associated membrane protein 2 (283 aa).

The disordered stretch occupies residues 1–47; that stretch reads MARHDPNPFADEEINPFANHTSVPPASNSYLKPLPPEPYDRGATVDI. At 1–123 the chain is on the cytoplasmic side; sequence MARHDPNPFA…LQKIQYVAFT (123 aa). Residues 18–30 show a composition bias toward polar residues; it reads ANHTSVPPASNSY. Positions 50–87 form a coiled coil; that stretch reads DSGNDLRAKEMELQAKENELKRKEQELKRREDAIARTG. 4 consecutive transmembrane segments (helical) span residues 124 to 144, 151 to 171, 186 to 206, and 234 to 254; these read TLLG…VAWI, IWLL…VLWY, FGAF…AAVA, and IMYF…IWVI. Topologically, residues 255 to 283 are cytoplasmic; the sequence is QQVYAYFRGSGKAAEMKREATKSTLMRAL.

This sequence belongs to the SCAMP family.

It localises to the cell membrane. The protein localises to the cytoplasmic vesicle. The protein resides in the secretory vesicle membrane. Functionally, probably involved in membrane trafficking. The chain is Secretory carrier-associated membrane protein 2 (SCAMP2) from Arabidopsis thaliana (Mouse-ear cress).